A 576-amino-acid chain; its full sequence is Acyl-CoA ligase sidI (576 aa).

Residues 3 to 11 (PVTTKTIRP) carry the PTS2-type peroxisomal targeting signal motif. Residues Asp-439, Arg-454, and Lys-553 each contribute to the ATP site.

Belongs to the ATP-dependent AMP-binding enzyme family.

The protein resides in the peroxisome. Its pathway is siderophore biosynthesis. In terms of biological role, acyl-CoA ligase; part of the gene cluster that mediates the biosynthesis of at least 11 siderophores, including beauverichelin A, dimerumic acid (DA), Na-dimethyl coprogen (NADC), eleutherazine B, ferricrocin (FC), fusarinine A, fusarinine C (FsC), metachelin A, mevalonolactone, rhodotorulic acid (RA) and tenellin. This cocktail of siderophores for iron metabolism is essential for virulence, and more specifically for the fungal virulence in penetrating through the host cuticle. Siderophore synthesis is also involved in conidial germination under iron-deficient conditions. For biosynthesis of fusarinine C, the transacylase SIDF transfers anhydromevalonyl to N(5)-hydroxyornithine. The required anhydromevalonyl-CoA moiety is derived from mevalonate by CoA ligation and dehydration catalyzed by SIDI and sidH respectively. The protein is Acyl-CoA ligase sidI of Beauveria bassiana (strain ARSEF 2860) (White muscardine disease fungus).